Here is a 343-residue protein sequence, read N- to C-terminus: DNA-directed RNA polymerase subunit alpha (343 aa).

The interval 1 to 239 (MGETVTIQKN…DQLNVFVNFE (239 aa)) is alpha N-terminal domain (alpha-NTD). The tract at residues 255–343 (FNPAFLKKVD…ELAKRFEDHY (89 aa)) is alpha C-terminal domain (alpha-CTD).

Belongs to the RNA polymerase alpha chain family. As to quaternary structure, homodimer. The RNAP catalytic core consists of 2 alpha, 1 beta, 1 beta' and 1 omega subunit. When a sigma factor is associated with the core the holoenzyme is formed, which can initiate transcription.

The catalysed reaction is RNA(n) + a ribonucleoside 5'-triphosphate = RNA(n+1) + diphosphate. In terms of biological role, DNA-dependent RNA polymerase catalyzes the transcription of DNA into RNA using the four ribonucleoside triphosphates as substrates. The polypeptide is DNA-directed RNA polymerase subunit alpha (Bradyrhizobium sp. (strain BTAi1 / ATCC BAA-1182)).